The chain runs to 215 residues: Ras-related protein Rab-5A (215 aa).

Positions 29, 30, 32, 33, 34, 35, 46, 47, 52, and 78 each coordinate GTP. S34 contributes to the Mg(2+) binding site. Short sequence motifs (switch) lie at residues 44–56 (QFHE…IGAA) and 77–93 (AGQE…YRGA). T52 lines the Mg(2+) pocket. Position 84 is a phosphoserine (S84). Residues N133, K134, D136, A164, and K165 each coordinate GTP. The interval 181–215 (LPKNEPQNPGANSARGRGVDLTEPAQPARSQCCSN) is disordered. Residues C212 and C213 are each lipidated (S-geranylgeranyl cysteine).

This sequence belongs to the small GTPase superfamily. Rab family. In terms of assembly, interacts with GDI1; this promotes dissociation from membranes; phosphorylation at Ser-84 disrupts this interaction. Interacts with GDI2; phosphorylation at Ser-84 disrupts the interaction. Interacts with EEA1. Interacts with RIN1 and GAPVD1, which regulate its pathway, probably by acting as a GEF. Interacts with ALS2CL, SUN2, ZFYVE20 and RUFY1. Interacts with RABEP1; one RABEP1 homodimer binds two RAB5A chains, but at opposite sides of the dimer. Interacts with SGSM1, SGSM3 and PIK3CB. Interacts with RINL. May be a component of a complex composed of RAB5A, DYN2 and PIK3C3. Does not interact with the BLOC-3 complex (heterodimer of HPS1 and HPS4). Interacts with CLN5. Interacts with APPL2. Interacts with F8A1/F8A2/F8A3. Found in a complex with F8A1/F8A2/F8A3, HTT and RAB5A; mediates the recruitment of HTT by RAB5A onto early endosomes. Interacts with ATP9A. Interacts with PPP1R21; mediates the recruitment of FERRY complex by RAB5A onto early endosomes. The cofactor is Mg(2+). Phosphorylation of Ser-84 in the switch II region by LRRK2 prevents the association of RAB regulatory proteins, including RAB GDP dissociation inhibitors GDI1 and GDI2.

It localises to the cell membrane. It is found in the early endosome membrane. The protein resides in the melanosome. Its subcellular location is the cytoplasmic vesicle. The protein localises to the cell projection. It localises to the ruffle. It is found in the membrane. The protein resides in the cytoplasm. Its subcellular location is the cytosol. The protein localises to the phagosome membrane. It localises to the endosome membrane. The enzyme catalyses GTP + H2O = GDP + phosphate + H(+). Regulated by guanine nucleotide exchange factors (GEFs) including RINL, which promote the exchange of bound GDP for free GTP. Regulated by GTPase activating proteins (GAPs) which increase the GTP hydrolysis activity. Inhibited by GDP dissociation inhibitors (GDIs). The small GTPases Rab are key regulators of intracellular membrane trafficking, from the formation of transport vesicles to their fusion with membranes. Rabs cycle between an inactive GDP-bound form and an active GTP-bound form that is able to recruit to membranes different sets of downstream effectors directly responsible for vesicle formation, movement, tethering and fusion. RAB5A is required for the fusion of plasma membranes and early endosomes. Contributes to the regulation of filopodia extension. Required for the exosomal release of SDCBP, CD63, PDCD6IP and syndecan. Regulates maturation of apoptotic cell-containing phagosomes, probably downstream of DYN2 and PIK3C3. The polypeptide is Ras-related protein Rab-5A (Rattus norvegicus (Rat)).